Reading from the N-terminus, the 486-residue chain is Putative protease Do-like 13 (486 aa).

The tract at residues lysine 44–isoleucine 229 is serine protease. Residues histidine 83, aspartate 114, and serine 192 each act as charge relay system in the active site. The PDZ domain occupies phenylalanine 241–glycine 334.

This sequence belongs to the peptidase S1C family.

In terms of biological role, putative serine protease. The protein is Putative protease Do-like 13 (DEGP13) of Arabidopsis thaliana (Mouse-ear cress).